The sequence spans 306 residues: MKHFLTLRDFSKEEILSLVNHASELKKEPKKLLQDKTLAMIFEKNSTRTRMAFELAITELGGKALFLSSNDLQLSRGEPVKDTARVIGTMVDFVMMRVNKHETLLEFARYSKAPVINALSEFYHPTQVLGDLLTIKEWNKMQNGIAKVAFIGDSNNMCNSWLIVAAILGFEFSIAIPKNYKISPEIWEFAMKQALISGAKISLSHDKFEALKDKDVVITDTWVSMGEENEKERKIKEFEGFMIDEKAMSVANKDAILLHCLPAYRGYEVSEEIFEKHADVIFEEARNRLYVVKALLCFLDNQRGRE.

Carbamoyl phosphate contacts are provided by residues 46–49 (STRT), Gln73, Arg97, and 124–127 (HPTQ). Residues Asn156, Asp220, and 224 to 225 (SM) contribute to the L-ornithine site. Residues 260-261 (CL) and Arg288 contribute to the carbamoyl phosphate site.

The protein belongs to the aspartate/ornithine carbamoyltransferase superfamily. OTCase family.

It localises to the cytoplasm. The enzyme catalyses carbamoyl phosphate + L-ornithine = L-citrulline + phosphate + H(+). Its pathway is amino-acid degradation; L-arginine degradation via ADI pathway; carbamoyl phosphate from L-arginine: step 2/2. Reversibly catalyzes the transfer of the carbamoyl group from carbamoyl phosphate (CP) to the N(epsilon) atom of ornithine (ORN) to produce L-citrulline. The sequence is that of Ornithine carbamoyltransferase from Campylobacter jejuni subsp. jejuni serotype O:6 (strain 81116 / NCTC 11828).